The following is a 120-amino-acid chain: uncharacterized protein (120 aa).

The signal sequence occupies residues M1–A22. The Extracellular segment spans residues F23 to S59. The helical transmembrane segment at L60 to L80 threads the bilayer. Residues S81 to N120 lie on the Cytoplasmic side of the membrane.

Its subcellular location is the membrane. This is an uncharacterized protein from Schizosaccharomyces pombe (strain 972 / ATCC 24843) (Fission yeast).